The sequence spans 80 residues: Toxin-like peptide AaF1CA1 (80 aa).

A signal peptide spans 1–22 (MMKLVLFSVIVILFSLIGSIHG). The region spanning 25 to 80 (VPGNYPLRPFRYRYGCAVPGDSDYCVRVCRKHGVRYGYCWFFTCWCEYLEDKNIKI) is the LCN-type CS-alpha/beta domain. Disulfide bonds link Cys40–Cys63, Cys49–Cys68, and Cys53–Cys70.

This sequence belongs to the long (3 C-C) scorpion toxin superfamily. Expressed by the venom gland.

It localises to the secreted. In terms of biological role, probable ion channel inhibitor. This Androctonus australis (Sahara scorpion) protein is Toxin-like peptide AaF1CA1.